The primary structure comprises 130 residues: MYGGICICVLLAALSVSSLGQQPAGSHDGSPVAAELQQSLTEPHRHSRAPSSAGPLKPAPRLDGSFEQRATIGALLAKYLQQARKGSTGRFSVLGNRVQSIDPTHRINDRDYMGWMDFGRRSAEEYEYSS.

The N-terminal stretch at 1–20 (MYGGICICVLLAALSVSSLG) is a signal peptide. A propeptide spanning residues 21–48 (QQPAGSHDGSPVAAELQQSLTEPHRHSR) is cleaved from the precursor. The interval 21 to 63 (QQPAGSHDGSPVAAELQQSLTEPHRHSRAPSSAGPLKPAPRLD) is disordered. Position 112 is a sulfotyrosine (Tyr112). At Phe118 the chain carries Phenylalanine amide. A propeptide spanning residues 122–130 (SAEEYEYSS) is cleaved from the precursor. Tyr126 and Tyr128 each carry sulfotyrosine.

This sequence belongs to the gastrin/cholecystokinin family. Post-translationally, the precursor is cleaved by proteases to produce a number of active cholecystokinins. In terms of tissue distribution, in the small intestine, the major production site is around the vitelline diverticulum.

The protein localises to the secreted. This peptide hormone induces gall bladder contraction and the release of pancreatic enzymes in the gut. Its function in the brain is not clear. It also decreases food intake and regulates gastrointestinal physiological processes. In Gallus gallus (Chicken), this protein is Cholecystokinin (CCK).